Consider the following 70-residue polypeptide: Translational regulator CsrA (70 aa).

Belongs to the CsrA/RsmA family. Homodimer; the beta-strands of each monomer intercalate to form a hydrophobic core, while the alpha-helices form wings that extend away from the core.

The protein localises to the cytoplasm. In terms of biological role, a translational regulator that binds mRNA to regulate translation initiation and/or mRNA stability. Usually binds in the 5'-UTR at or near the Shine-Dalgarno sequence preventing ribosome-binding, thus repressing translation. Its main target seems to be the major flagellin gene, while its function is anatagonized by FliW. The chain is Translational regulator CsrA from Clostridioides difficile (strain 630) (Peptoclostridium difficile).